A 309-amino-acid polypeptide reads, in one-letter code: Pantothenate synthetase (309 aa).

Thr-2 is subject to N-acetylthreonine. 40–47 (MGALHEGH) lines the ATP pocket. The active-site Proton donor is His-47. Gln-72 contacts (R)-pantoate. Gln-72 provides a ligand contact to beta-alanine. The Mg(2+) site is built by Asp-88, Asp-89, and Gln-92. Residue 158-161 (GEKD) coordinates ATP. Gln-164 lines the (R)-pantoate pocket. Residues Val-187 and 195–198 (MSSR) contribute to the ATP site.

Belongs to the pantothenate synthetase family.

It is found in the cytoplasm. It catalyses the reaction (R)-pantoate + beta-alanine + ATP = (R)-pantothenate + AMP + diphosphate + H(+). Its pathway is cofactor biosynthesis; (R)-pantothenate biosynthesis; (R)-pantothenate from (R)-pantoate and beta-alanine: step 1/1. Pantothenate exhibits uncompetitive inhibition toward both D-pantoate and ATP, and non-competitive inhibition toward beta-alanine. AMPCPP exhibits competitive inhibition toward ATP, uncompetitive inhibition toward beta-alanine, and non-competitive inhibition toward D-pantoate. The enzyme is most active in the presence of magnesium or manganese. Other divalent cations (cobalt, nickel, zinc) are less effective. Functionally, catalyzes the condensation of pantoate with beta-alanine in an ATP-dependent reaction via a pantoyl-adenylate intermediate. This chain is Pantothenate synthetase (panC), found in Mycobacterium tuberculosis (strain ATCC 25618 / H37Rv).